The sequence spans 705 residues: Elongation factor G (705 aa).

The tr-type G domain occupies 8 to 290; sequence ERYRNFGIMA…GVVHLLPSPA (283 aa). GTP is bound by residues 17 to 24, 88 to 92, and 142 to 145; these read AHIDAGKT, DTPGH, and NKMD. The disordered stretch occupies residues 290 to 309; that stretch reads ADRPPVQGIDEDEKEDTRAA.

It belongs to the TRAFAC class translation factor GTPase superfamily. Classic translation factor GTPase family. EF-G/EF-2 subfamily.

The protein localises to the cytoplasm. Functionally, catalyzes the GTP-dependent ribosomal translocation step during translation elongation. During this step, the ribosome changes from the pre-translocational (PRE) to the post-translocational (POST) state as the newly formed A-site-bound peptidyl-tRNA and P-site-bound deacylated tRNA move to the P and E sites, respectively. Catalyzes the coordinated movement of the two tRNA molecules, the mRNA and conformational changes in the ribosome. The chain is Elongation factor G from Xanthomonas euvesicatoria pv. vesicatoria (strain 85-10) (Xanthomonas campestris pv. vesicatoria).